The primary structure comprises 65 residues: Trypsin inhibitor 1 (65 aa).

Intrachain disulfides connect cysteine 39–cysteine 56, cysteine 46–cysteine 58, and cysteine 52–cysteine 64.

This sequence belongs to the protease inhibitor I7 (squash-type serine protease inhibitor) family.

The protein localises to the secreted. In terms of biological role, inhibits trypsin. The protein is Trypsin inhibitor 1 of Trichosanthes kirilowii (Chinese snake gourd).